A 244-amino-acid chain; its full sequence is MSKLDLNALNELPKVDRILALAETNAELEKLDAEGRVAWALDNLPGEYVLSSSFGIQAAVSLHLVNQIHPDIPVILTDTGYLFPETYRFIDELTDKLKLNLKVYRATESAAWQEARYGKLWEQGVEGIEKYNDINKVEPMNRALKELNAQTWFAGLRREQSGSRANLPVLAIQRGVFKVLPIIDWDNRTIYQYLQKHGLKYHPLWDEGYLSVGDTHTTRKWEPGMAEEETRFFGLKRECGLHEG.

The Nucleophile; cysteine thiosulfonate intermediate role is filled by Cys239.

It belongs to the PAPS reductase family. CysH subfamily.

The protein localises to the cytoplasm. It catalyses the reaction [thioredoxin]-disulfide + sulfite + adenosine 3',5'-bisphosphate + 2 H(+) = [thioredoxin]-dithiol + 3'-phosphoadenylyl sulfate. The protein operates within sulfur metabolism; hydrogen sulfide biosynthesis; sulfite from sulfate: step 3/3. In terms of biological role, catalyzes the formation of sulfite from phosphoadenosine 5'-phosphosulfate (PAPS) using thioredoxin as an electron donor. This chain is Phosphoadenosine 5'-phosphosulfate reductase, found in Shigella flexneri.